The primary structure comprises 278 residues: 2-succinyl-6-hydroxy-2,4-cyclohexadiene-1-carboxylate synthase (278 aa).

Belongs to the AB hydrolase superfamily. MenH family. Monomer.

It carries out the reaction 5-enolpyruvoyl-6-hydroxy-2-succinyl-cyclohex-3-ene-1-carboxylate = (1R,6R)-6-hydroxy-2-succinyl-cyclohexa-2,4-diene-1-carboxylate + pyruvate. The protein operates within quinol/quinone metabolism; 1,4-dihydroxy-2-naphthoate biosynthesis; 1,4-dihydroxy-2-naphthoate from chorismate: step 3/7. Its pathway is quinol/quinone metabolism; menaquinone biosynthesis. Its function is as follows. Catalyzes a proton abstraction reaction that results in 2,5-elimination of pyruvate from 2-succinyl-5-enolpyruvyl-6-hydroxy-3-cyclohexene-1-carboxylate (SEPHCHC) and the formation of 2-succinyl-6-hydroxy-2,4-cyclohexadiene-1-carboxylate (SHCHC). This chain is 2-succinyl-6-hydroxy-2,4-cyclohexadiene-1-carboxylate synthase, found in Photorhabdus laumondii subsp. laumondii (strain DSM 15139 / CIP 105565 / TT01) (Photorhabdus luminescens subsp. laumondii).